The primary structure comprises 482 residues: UDP-glycosyltransferase 1 (482 aa).

The N-linked (GlcNAc...) asparagine glycan is linked to Asn-243. The chain crosses the membrane as a helical span at residues 450 to 470; it reads IYLVYALVLGSAWWIGKTILG.

This sequence belongs to the glycosyltransferase 28 family.

Its subcellular location is the membrane. It catalyses the reaction exophillate aglycone + UDP-alpha-D-glucose = exophillate + UDP + H(+). The protein operates within secondary metabolite biosynthesis. Its function is as follows. Acts as a depside 2-O-glucosyltransferase that catalyzes the first glycosylation step during phaeomoniecin D biosynthesis by producing the intermediate exophillic acid which is further O-galactosylated into phaeomoniecin D by the C-galactosyltransferase OGT2. This chain is UDP-glycosyltransferase 1, found in Phaeomoniella chlamydospora (Phaeoacremonium chlamydosporum).